Reading from the N-terminus, the 82-residue chain is uncharacterized protein (82 aa).

The next 3 helical transmembrane spans lie at 4–26 (IAVL…AGHF), 31–50 (FWVA…VTLA), and 55–77 (SFIF…TLFL).

Its subcellular location is the cell membrane. This is an uncharacterized protein from Bacillus subtilis (strain 168).